A 401-amino-acid chain; its full sequence is 3-hydroxyisobutyryl-CoA hydrolase-like protein 1, mitochondrial (401 aa).

The N-terminal 26 residues, Met1–Cys26, are a transit peptide targeting the mitochondrion.

This sequence belongs to the enoyl-CoA hydratase/isomerase family.

The protein resides in the mitochondrion. This Arabidopsis thaliana (Mouse-ear cress) protein is 3-hydroxyisobutyryl-CoA hydrolase-like protein 1, mitochondrial.